Reading from the N-terminus, the 485-residue chain is ATP synthase subunit beta (485 aa).

Basic and acidic residues predominate over residues 1-11 (MPATETADKNT). The interval 1-20 (MPATETADKNTKSANSDTSG) is disordered. ATP is bound at residue 170 to 177 (GGAGVGKT).

Belongs to the ATPase alpha/beta chains family. F-type ATPases have 2 components, CF(1) - the catalytic core - and CF(0) - the membrane proton channel. CF(1) has five subunits: alpha(3), beta(3), gamma(1), delta(1), epsilon(1). CF(0) has three main subunits: a(1), b(2) and c(9-12). The alpha and beta chains form an alternating ring which encloses part of the gamma chain. CF(1) is attached to CF(0) by a central stalk formed by the gamma and epsilon chains, while a peripheral stalk is formed by the delta and b chains.

It is found in the cell membrane. The catalysed reaction is ATP + H2O + 4 H(+)(in) = ADP + phosphate + 5 H(+)(out). Its function is as follows. Produces ATP from ADP in the presence of a proton gradient across the membrane. The catalytic sites are hosted primarily by the beta subunits. The chain is ATP synthase subunit beta from Mycolicibacterium paratuberculosis (strain ATCC BAA-968 / K-10) (Mycobacterium paratuberculosis).